Reading from the N-terminus, the 51-residue chain is Insulin-1 (51 aa).

3 disulfides stabilise this stretch: Cys8–Cys37, Cys20–Cys50, and Cys36–Cys41.

The protein belongs to the insulin family. In terms of assembly, heterodimer of a B chain and an A chain linked by two disulfide bonds.

The protein resides in the secreted. In terms of biological role, insulin decreases blood glucose concentration. It increases cell permeability to monosaccharides, amino acids and fatty acids. It accelerates glycolysis, the pentose phosphate cycle, and glycogen synthesis in liver. The protein is Insulin-1 (ins1) of Batrachoididae sp. (Toadfish).